Here is a 412-residue protein sequence, read N- to C-terminus: Diphosphomevalonate decarboxylase MVD1, peroxisomal (412 aa).

Tyrosine 23–lysine 26 contacts (R)-5-diphosphomevalonate. Positions serine 40–leucine 48 match the Peroxisomal targeting signal PTS2 motif. (R)-5-diphosphomevalonate-binding positions include arginine 78, serine 161 to arginine 166, and threonine 217.

It belongs to the diphosphomevalonate decarboxylase family. Homodimer.

The protein resides in the peroxisome. It catalyses the reaction (R)-5-diphosphomevalonate + ATP = isopentenyl diphosphate + ADP + phosphate + CO2. It participates in isoprenoid biosynthesis; isopentenyl diphosphate biosynthesis via mevalonate pathway; isopentenyl diphosphate from (R)-mevalonate: step 3/3. Its function is as follows. Performs the first committed step in the biosynthesis of isoprene-containing compounds such as sterols and terpenoids. Is specific for (R)-5-diphosphomevalonate (MVAPP). The catalytic efficiency with (R)-5-phosphomevalonate (MVAP) as substrate is 10000-fold lower than for MVAPP. Can complement a yeast mutant defective in MVD activity. This Arabidopsis thaliana (Mouse-ear cress) protein is Diphosphomevalonate decarboxylase MVD1, peroxisomal.